Reading from the N-terminus, the 907-residue chain is Nuclear receptor coactivator 7 (907 aa).

A compositionally biased stretch (basic and acidic residues) spans 1–12 (METKEEKKERRQ). Residues 1–29 (METKEEKKERRQGYFARLKKKRQAKQNTE) are a coiled coil. Disordered stretches follow at residues 1 to 51 (METK…DDES), 63 to 83 (DNCK…RKKK), and 99 to 121 (YSTD…SQKP). Residues 25-41 (KQNTETVSANSPGSPVS) show a composition bias toward polar residues. 2 stretches are compositionally biased toward basic and acidic residues: residues 68-78 (AGEKETVPEKE) and 99-116 (YSTD…EKKM). Residues 125–168 (IEYTAGNQDTINSIALKFNITPNKLVELNKLFTHTIVPGQILFV) form the LysM domain. Disordered regions lie at residues 335–373 (LSKE…QSSE) and 401–443 (DPHV…MDRG). Residues 401–422 (DPHVKEPSEEKNVSDIRTKEDS) are compositionally biased toward basic and acidic residues. The 162-residue stretch at 746 to 907 (ALLENMHIEQ…IQDVEVWTFE (162 aa)) folds into the TLDc domain.

This sequence belongs to the OXR1 family.

Its subcellular location is the nucleus. Enhances the transcriptional activities of several nuclear receptors. The protein is Nuclear receptor coactivator 7 (NCOA7) of Gallus gallus (Chicken).